The sequence spans 241 residues: Probable 2-phosphosulfolactate phosphatase (241 aa).

The protein belongs to the ComB family. Mg(2+) serves as cofactor.

The catalysed reaction is (2R)-O-phospho-3-sulfolactate + H2O = (2R)-3-sulfolactate + phosphate. The polypeptide is Probable 2-phosphosulfolactate phosphatase (Deinococcus geothermalis (strain DSM 11300 / CIP 105573 / AG-3a)).